We begin with the raw amino-acid sequence, 159 residues long: Ribosomal RNA large subunit methyltransferase H (159 aa).

Residues Leu76, Gly108, and 127 to 132 (FSKMTF) contribute to the S-adenosyl-L-methionine site.

Belongs to the RNA methyltransferase RlmH family. As to quaternary structure, homodimer.

The protein localises to the cytoplasm. The enzyme catalyses pseudouridine(1915) in 23S rRNA + S-adenosyl-L-methionine = N(3)-methylpseudouridine(1915) in 23S rRNA + S-adenosyl-L-homocysteine + H(+). Functionally, specifically methylates the pseudouridine at position 1915 (m3Psi1915) in 23S rRNA. The polypeptide is Ribosomal RNA large subunit methyltransferase H (Exiguobacterium sp. (strain ATCC BAA-1283 / AT1b)).